The sequence spans 245 residues: Eukaryotic translation initiation factor 4E type 2 (245 aa).

Residues Met1 to Ser38 show a composition bias toward basic and acidic residues. Residues Met1–Ala52 are disordered. Residue Ser13 is modified to Phosphoserine. Residues His54–Gln57 form an EIF4EBP1/2/3 binding region. Tyr78 to Glu79 provides a ligand contact to mRNA. The EIF4EBP1/2/3 binding stretch occupies residues Trp95 to Ser99. Residues His110 and Trp124–Glu125 contribute to the mRNA site. The residue at position 134 (Lys134) is an N6-acetyllysine; alternate. Residue Lys134 forms a Glycyl lysine isopeptide (Lys-Gly) (interchain with G-Cter in ISG15); alternate linkage. An EIF4EBP1/2/3 binding region spans residues Asn150–Gly157. Residues Arg174 to Ile179 and Lys222 to Pro224 contribute to the mRNA site. A Glycyl lysine isopeptide (Lys-Gly) (interchain with G-Cter in ISG15) cross-link involves residue Lys222.

The protein belongs to the eukaryotic initiation factor 4E family. In terms of assembly, interacts with EIF4EBP1, EIF4EBP2 and EIF4EBP3. Does not interact with eIF4G (EIF4G1, EIF4G2 or EIF4G3). Component of the 4EHP-GYF2 complex, at least composed of EIF4E2, GIGYF2 and ZNF598. Interacts with GIGYF2 (via the 4EHP-binding motif); the interaction is direct. Interacts with EIF4ENIF1/4E-T (via YXXXXLphi motif); increasing affinity for the 7-methylguanosine-containing mRNA cap. Ubiquitinated by ARIH1. The consequences of ubiquitination are however unclear: according to a report, EIF4E2 ubiquitination leads to promote EIF4E2 cap-binding and protein translation arrest. According to another report ubiquitination leads to its subsequent degradation. In terms of processing, ISGylation enhances its cap structure-binding activity and translation-inhibition activity. As to expression, widely expressed with highest levels in testis, kidney and liver.

The protein localises to the cytoplasm. The protein resides in the P-body. Recognizes and binds the 7-methylguanosine-containing mRNA cap during an early step in the initiation. Acts as a repressor of translation initiation. In contrast to EIF4E, it is unable to bind eIF4G (EIF4G1, EIF4G2 or EIF4G3), suggesting that it acts by competing with EIF4E and block assembly of eIF4F at the cap. In P-bodies, component of a complex that promotes miRNA-mediated translational repression. Involved in virus-induced host response by mediating miRNA MIR34A-induced translational silencing which controls IFNB1 production by a negative feedback mechanism. In terms of biological role, component of the 4EHP-GYF2 complex, a multiprotein complex that acts as a repressor of translation initiation. In association with GIGYF2, assists ribosome-associated quality control (RQC) by sequestering the mRNA cap, blocking ribosome initiation and decreasing the translational load on problematic messages. Part of a pathway that works in parallel to RQC-mediated degradation of the stalled nascent polypeptide. GIGYF2 and EIF4E2 work downstream and independently of ZNF598, which seems to work as a scaffold that can recruit them to faulty mRNA even if alternative recruitment mechanisms may exist. The sequence is that of Eukaryotic translation initiation factor 4E type 2 from Mus musculus (Mouse).